A 660-amino-acid chain; its full sequence is Acetyl-coenzyme A synthetase (660 aa).

Residues 197–200 (RGGK) and T317 each bind CoA. Residues 397–399 (GEP), 421–426 (DTWWQT), D512, and R528 each bind ATP. Residue S536 coordinates CoA. Residue R539 participates in ATP binding. Residues V550, H552, and V555 each coordinate Mg(2+). An N6-acetyllysine modification is found at K625.

Belongs to the ATP-dependent AMP-binding enzyme family. Mg(2+) serves as cofactor. Acetylated. Deacetylation by the SIR2-homolog deacetylase activates the enzyme.

The enzyme catalyses acetate + ATP + CoA = acetyl-CoA + AMP + diphosphate. Catalyzes the conversion of acetate into acetyl-CoA (AcCoA), an essential intermediate at the junction of anabolic and catabolic pathways. AcsA undergoes a two-step reaction. In the first half reaction, AcsA combines acetate with ATP to form acetyl-adenylate (AcAMP) intermediate. In the second half reaction, it can then transfer the acetyl group from AcAMP to the sulfhydryl group of CoA, forming the product AcCoA. This chain is Acetyl-coenzyme A synthetase, found in Burkholderia mallei (strain NCTC 10247).